Consider the following 372-residue polypeptide: Cell division protein FtsZ 1 (372 aa).

GTP contacts are provided by residues 51 to 55 (GAGCN), 138 to 140 (GTG), Glu169, Arg173, and Asp216. Positions 350 to 360 (PEEETPLETPE) are enriched in acidic residues. The disordered stretch occupies residues 350–372 (PEEETPLETPEESPSIEISIPEL). Residues 361 to 372 (ESPSIEISIPEL) show a composition bias toward low complexity.

Belongs to the FtsZ family. In terms of assembly, homodimer. Polymerizes to form a dynamic ring structure in a strictly GTP-dependent manner. Interacts directly with several other division proteins.

The protein localises to the cytoplasm. Essential cell division protein that forms a contractile ring structure (Z ring) at the future cell division site. The regulation of the ring assembly controls the timing and the location of cell division. One of the functions of the FtsZ ring is to recruit other cell division proteins to the septum to produce a new cell wall between the dividing cells. Binds GTP and shows GTPase activity. This Pyrococcus furiosus (strain ATCC 43587 / DSM 3638 / JCM 8422 / Vc1) protein is Cell division protein FtsZ 1.